A 230-amino-acid chain; its full sequence is Phosphatidate cytidylyltransferase (230 aa).

Helical transmembrane passes span 33-53 (FVIAILWCKPLFYILMILVGT), 67-87 (IPDLLIGLIIIPIPISLLIFL), 95-115 (WLIMLYFCIMWSVDTFAMIGG), 133-153 (WSGLVTGVLSAGLVAVLVSFI), 167-187 (IYLFIISCILALIAQLSDLFI), and 206-226 (HGGVLDRFDSIILTTLILFLM).

The protein belongs to the CDS family.

It is found in the cell membrane. The catalysed reaction is a 1,2-diacyl-sn-glycero-3-phosphate + CTP + H(+) = a CDP-1,2-diacyl-sn-glycerol + diphosphate. Its pathway is phospholipid metabolism; CDP-diacylglycerol biosynthesis; CDP-diacylglycerol from sn-glycerol 3-phosphate: step 3/3. The protein is Phosphatidate cytidylyltransferase (cdsA) of Rickettsia conorii (strain ATCC VR-613 / Malish 7).